A 146-amino-acid polypeptide reads, in one-letter code: Hemoglobin subunit beta (146 aa).

Residue Val1 is modified to N-acetylvaline. One can recognise a Globin domain in the interval 2–146 (HLSGEEKAAV…VANALAHKYH (145 aa)). A Phosphothreonine modification is found at Thr12. Position 44 is a phosphoserine (Ser44). Residue Lys59 is modified to N6-acetyllysine. His63 is a heme b binding site. N6-acetyllysine is present on Lys82. His92 lines the heme b pocket. Cys93 is subject to S-nitrosocysteine. Lys144 carries the N6-acetyllysine modification.

The protein belongs to the globin family. Heterotetramer of two alpha chains and two beta chains. In terms of tissue distribution, red blood cells.

Its function is as follows. Involved in oxygen transport from the lung to the various peripheral tissues. This Tupaia glis (Common tree shrew) protein is Hemoglobin subunit beta (HBB).